A 157-amino-acid polypeptide reads, in one-letter code: MSDDNQTKLEAADIQALLAVLPHRYPFLLIDRIVDIDGDVSATGIKNVTINEPHFTGHFPENPIMPGVLIVEAMAQTAGAISLLQRKTGRPGVVYFMTIDNAKFRRPVVPGDRLLLYVKKIKQRANISKYECVAEVDGVKVAEAEVAAMISVADENL.

H58 is an active-site residue.

The protein belongs to the thioester dehydratase family. FabZ subfamily.

It localises to the cytoplasm. The enzyme catalyses a (3R)-hydroxyacyl-[ACP] = a (2E)-enoyl-[ACP] + H2O. Functionally, involved in unsaturated fatty acids biosynthesis. Catalyzes the dehydration of short chain beta-hydroxyacyl-ACPs and long chain saturated and unsaturated beta-hydroxyacyl-ACPs. The sequence is that of 3-hydroxyacyl-[acyl-carrier-protein] dehydratase FabZ from Brucella abortus biovar 1 (strain 9-941).